The primary structure comprises 271 residues: Phosphatidylglycerol--prolipoprotein diacylglyceryl transferase (271 aa).

Helical transmembrane passes span Ile18–Leu38, Tyr60–Tyr80, Phe103–Tyr123, Leu137–Leu157, Pro181–Ile201, Gly209–Phe229, and Ile236–Leu256. A 1,2-diacyl-sn-glycero-3-phospho-(1'-sn-glycerol) is bound at residue Arg152.

Belongs to the Lgt family.

It localises to the cell inner membrane. It catalyses the reaction L-cysteinyl-[prolipoprotein] + a 1,2-diacyl-sn-glycero-3-phospho-(1'-sn-glycerol) = an S-1,2-diacyl-sn-glyceryl-L-cysteinyl-[prolipoprotein] + sn-glycerol 1-phosphate + H(+). It functions in the pathway protein modification; lipoprotein biosynthesis (diacylglyceryl transfer). Its function is as follows. Catalyzes the transfer of the diacylglyceryl group from phosphatidylglycerol to the sulfhydryl group of the N-terminal cysteine of a prolipoprotein, the first step in the formation of mature lipoproteins. This Campylobacter lari (strain RM2100 / D67 / ATCC BAA-1060) protein is Phosphatidylglycerol--prolipoprotein diacylglyceryl transferase.